A 213-amino-acid polypeptide reads, in one-letter code: Nucleolar protein 12 (213 aa).

Residues 33–96 are a coiled coil; the sequence is GFHKRKVERK…RLVTAKTESV (64 aa). Positions 109–213 are disordered; that stretch reads TISDLDLSGA…LTGKAQHSRE (105 aa). Positions 130-139 are enriched in acidic residues; the sequence is AGDESEEEAS. A compositionally biased stretch (basic residues) spans 170–182; sequence AHSRKKVKRKHPR.

This sequence belongs to the RRP17 family. In terms of assembly, interacts with KIAA1191.

The protein resides in the nucleus. It is found in the nucleolus. Its subcellular location is the cytoplasm. Functionally, multifunctional RNA binding protein that plays a role in RNA metabolism and DNA maintenance. Participates in the resolution of DNA stress and the maintenance of genome integrity by localizing to sites of DNA insults. Also plays a role in proper nucleolar organization by limiting nucleolar size and regulating nucleolar number. Mechanistically, regulates the nucleolar levels of fibrillarin and nucleolin, two key players in pre-rRNA processing and ribosome assembly. This chain is Nucleolar protein 12 (NOL12), found in Pongo abelii (Sumatran orangutan).